The primary structure comprises 406 residues: O-glycosyltransferase PaGT (406 aa).

Residues 1–26 (MSPPSQIKPPQGTTPVPPSELDPRSD) form a disordered region.

The protein belongs to the afumC glycosyltransferase family.

The protein operates within mycotoxin biosynthesis. In terms of biological role, O-glycosyltransferase; part of the 2 gene clusters that mediate the biosynthesis of fusicoccins, diterpene glucosides that display phytohormone-like activity and function as potent activators of plasma membrane H(+)-ATPases in plants by modifying 14-3-3 proteins and cause the plant disease constriction canker. The first step in the pathway is performed by the fusicoccadiene synthase PaFS that possesses both prenyl transferase and terpene cyclase activity, converting isopentenyl diphosphate and dimethylallyl diphosphate into geranylgeranyl diphosphate (GGDP) and successively converting GGDP into fusicocca-2,10(14)-diene, a precursor for fusicoccin H. The second step is the oxidation at the C-8 position by the cytochrome P450 monooxygenase PaP450-2 to yield fusicocca-2,10(14)-diene-8-beta-ol. The cytochrome P450 monooxygenase PaP450-1 then catalyzes the hydroxylation at the C-16 position to produce fusicocca-2,10(14)-diene-8-beta,16-diol. The dioxygenase fc-dox then catalyzes the 16-oxydation of fusicocca-2,10(14)-diene-8-beta,16-diol to yield an aldehyde (8-beta-hydroxyfusicocca-1,10(14)-dien-16-al). The short-chain dehydrogenase/reductase fc-sdr catalyzes the reduction of the aldehyde to yield fusicocca-1,10(14)-diene-8-beta,16-diol. The next step is the hydroxylation at C-9 performed by the cytochrome P450 monooxygenase PaP450-3 that leads to fusicoccin H aglycon which is glycosylated to fusicoccin H by the O-glycosyltransferase PaGT. Hydroxylation at C-12 by the cytochrome P450 monooxygenase PaP450-4 leads then to the production of fusicoccin Q and is followed by methylation by the O-methyltransferase PaMT to yield fusicoccin P. Fusicoccin P is further converted to fusicoccin J via prenylation by the O-glucose prenyltransferase PaPT. Cytochrome P450 monooxygenase PaP450-5 then performs hydroxylation at C-19 to yield dideacetyl-fusicoccin A which is acetylated to 3'-O-deacetyl-fusicoccin A by the O-acetyltransferase PaAT-2. Finally, a another acetylation by the O-acetyltransferase PaAT-1 yields fusicoccin A. The sequence is that of O-glycosyltransferase PaGT from Phomopsis amygdali (Fusicoccum amygdali).